Reading from the N-terminus, the 3390-residue chain is Genome polyprotein (3390 aa).

The segment at 1 to 15 is interaction with host EXOC1; the sequence is MNNQRKKTGKPSINM. Residues 1 to 100 lie on the Cytoplasmic side of the membrane; the sequence is MNNQRKKTGK…MLSIINKRKK (100 aa). Positions 37-72 are hydrophobic; homodimerization of capsid protein C; the sequence is LLNGQGPMKLVMAFIAFLRFLAIPPTAGVLARWGTF. Residues 101–114 constitute a propeptide, ER anchor for the capsid protein C, removed in mature form by serine protease NS3; the sequence is TSLCLMMMLPATLA. Residues 101–118 traverse the membrane as a helical segment; it reads TSLCLMMMLPATLAFHLT. The Extracellular portion of the chain corresponds to 119 to 243; that stretch reads SRDGEPRMIV…VEKVETWALR (125 aa). An N-linked (GlcNAc...) asparagine; by host glycan is attached at Asn-183. Residues 244–264 form a helical membrane-spanning segment; it reads HPGFTILALFLAHYIGTSLTQ. A topological domain (cytoplasmic) is located at residue Lys-265. Residues 266-280 form a helical membrane-spanning segment; that stretch reads VVIFILLMLVTPSMT. Topologically, residues 281–723 are extracellular; that stretch reads MRCVGVGNRD…VHQIFGSAYT (443 aa). Disulfide bonds link Cys-283-Cys-310, Cys-340-Cys-401, Cys-354-Cys-385, and Cys-372-Cys-396. A glycan (N-linked (GlcNAc...) asparagine; by host) is linked at Asn-347. Residues 378-391 form a fusion peptide region; that stretch reads DRGWGNGCGLFGKG. The N-linked (GlcNAc...) asparagine; by host glycan is linked to Asn-433. 2 cysteine pairs are disulfide-bonded: Cys-463-Cys-563 and Cys-580-Cys-611. A helical transmembrane segment spans residues 724–744; the sequence is ALFSGVSWIMKIGIGVLLTWI. Residues 745–750 lie on the Cytoplasmic side of the membrane; that stretch reads GLNSKN. A helical transmembrane segment spans residues 751-771; the sequence is TSMSFSCIAIGIITLYLGVVV. Residues 772-1193 are Extracellular-facing; it reads QADMGCVINW…MIGSNASDRM (422 aa). Disulfide bonds link Cys-777–Cys-788, Cys-828–Cys-916, Cys-952–Cys-996, Cys-1053–Cys-1102, Cys-1064–Cys-1086, and Cys-1085–Cys-1089. N-linked (GlcNAc...) asparagine; by host glycans are attached at residues Asn-903 and Asn-980. 2 N-linked (GlcNAc...) asparagine; by host glycosylation sites follow: Asn-1132 and Asn-1188. Residues 1194–1218 traverse the membrane as a helical segment; the sequence is GMGVTYLALIATFKIQPFLALGFFL. Residues 1219–1224 lie on the Cytoplasmic side of the membrane; it reads RKLTSR. The chain crosses the membrane as a helical span at residues 1225–1243; sequence ENLLLGVGLAMAATLRLPE. Residues 1244–1267 lie on the Lumenal side of the membrane; that stretch reads DIEQMANGIALGLMALKLITQFET. The helical transmembrane segment at 1268–1288 threads the bilayer; it reads YQLWTALVSLTCSNTIFTLTV. A topological domain (cytoplasmic) is located at residue Ala-1289. Residues 1290–1308 traverse the membrane as a helical segment; that stretch reads WRTATLILAGISLLPVCQS. Over 1309–1315 the chain is Lumenal; it reads SSMRKTD. A helical membrane pass occupies residues 1316–1336; sequence WLPMTVAAMGVPPLPLFIFSL. The Cytoplasmic segment spans residues 1337 to 1344; it reads KDTLKRRS. Residues 1345-1365 form a helical membrane-spanning segment; that stretch reads WPLNEGVMAVGLVSILASSLL. At 1366–1368 the chain is on the lumenal side; sequence RND. A helical transmembrane segment spans residues 1369 to 1389; sequence VPMAGPLVAGGLLIACYVITG. Residues 1390–1443 lie on the Cytoplasmic side of the membrane; sequence TSADLTVEKAADVTWEEEAEQTGVSHNLMITVDDDGTMRIKDDETENILTVLLK. An interacts with and activates NS3 protease region spans residues 1396–1435; the sequence is VEKAADVTWEEEAEQTGVSHNLMITVDDDGTMRIKDDETE. The segment at residues 1444–1464 is an intramembrane region (helical); the sequence is TALLIVSGIFPCSIPATLLVW. At 1465 to 2146 the chain is on the cytoplasmic side; sequence HTWQKQTQRS…VEELPETMET (682 aa). Residues 1474–1651 enclose the Peptidase S7 domain; sequence SGVLWDVPSP…NAEPDGPTPE (178 aa). Active-site charge relay system; for serine protease NS3 activity residues include His-1524, Asp-1548, and Ser-1608. The 157-residue stretch at 1654 to 1810 folds into the Helicase ATP-binding domain; that stretch reads EEMFKKRNLT…QSNAPIQDEE (157 aa). Residues 1658-1661 form an important for RNA-binding region; that stretch reads KKRN. 1667–1674 lines the ATP pocket; the sequence is LHPGSGKT. The DEAH box motif lies at 1758 to 1761; it reads DEAH. Residues 1821–1986 enclose the Helicase C-terminal domain; the sequence is GNEWITDFVG…GIIPALFEPE (166 aa). Lys-1862 carries the N6-acetyllysine; by host modification. Residues 2147 to 2167 form a helical membrane-spanning segment; sequence LLLLGLMILLTGGAMLFLISG. The Lumenal segment spans residues 2168-2169; the sequence is KG. Residues 2170-2190 constitute an intramembrane region (helical); sequence IGKTSIGLICVIASSGMLWMA. Position 2191 (Asp-2191) is a topological domain, lumenal. The chain crosses the membrane as a helical span at residues 2192-2212; sequence VPLQWIASAIVLEFFMMVLLI. The Cytoplasmic segment spans residues 2213–2227; it reads PEPEKQRTPQDNQLA. Residues 2228-2248 form a helical membrane-spanning segment; the sequence is YVVIGILTLAAIVAANEMGLL. Topologically, residues 2249–2273 are lumenal; sequence ETTKRDLGMSKEPGVVSPTSYLDVD. The helical intramembrane region spans 2274 to 2294; sequence LHPASAWTLYAVATTVITPML. Residues 2295 to 2305 lie on the Lumenal side of the membrane; that stretch reads RHTIENSTANV. Residues Asn-2300 and Asn-2304 are each glycosylated (N-linked (GlcNAc...) asparagine; by host). The segment at residues 2306–2326 is an intramembrane region (helical); sequence SLAAIANQAVVLMGLDKGWPI. Residues 2327 to 2346 lie on the Lumenal side of the membrane; that stretch reads SKMDLGVPLLALGCYSQVNP. Residues 2347 to 2367 traverse the membrane as a helical segment; the sequence is LTLIAAVLLLVTHYAIIGPGL. Residues 2368–2412 lie on the Cytoplasmic side of the membrane; that stretch reads QAKATREAQKRTAAGIMKNPTVDGIMTIDLDPVIYDSKFEKQLGQ. Residues 2413–2433 traverse the membrane as a helical segment; that stretch reads VMLLVLCAVQLLLMRTSWALC. At 2434–2458 the chain is on the lumenal side; sequence EVLTLATGPITTLWEGSPGKFWNTT. The N-linked (GlcNAc...) asparagine; by host glycan is linked to Asn-2456. Residues 2459-2479 form a helical membrane-spanning segment; it reads IAVSMANIFRGSYLAGAGLAF. Residues 2480-3390 are Cytoplasmic-facing; the sequence is SIMKSVGTGK…KEEESEGAIW (911 aa). The mRNA cap 0-1 NS5-type MT domain maps to 2492 to 2753; sequence TGSQGETLGE…DVDLGAGTRH (262 aa). An S-adenosyl-L-methionine-binding site is contributed by Ser-2546. Position 2546 is a phosphoserine (Ser-2546). The For 2'-O-MTase activity role is filled by Lys-2551. Positions 2567-2570 match the SUMO-interacting motif motif; that stretch reads VIDL. Residues Gly-2576, Trp-2577, Thr-2594, Lys-2595, Asp-2621, and Val-2622 each coordinate S-adenosyl-L-methionine. Catalysis depends on Asp-2636, which acts as the For 2'-O-MTase activity. Ile-2637 lines the S-adenosyl-L-methionine pocket. Residues Lys-2670 and Glu-2706 each act as for 2'-O-MTase activity in the active site. Residue Tyr-2708 coordinates S-adenosyl-L-methionine. Positions 2927, 2931, 2936, and 2939 each coordinate Zn(2+). The region spanning 3018–3168 is the RdRp catalytic domain; it reads AMYADDTAGW…PIDDRFANAL (151 aa). Positions 3202, 3218, and 3337 each coordinate Zn(2+).

In the N-terminal section; belongs to the class I-like SAM-binding methyltransferase superfamily. mRNA cap 0-1 NS5-type methyltransferase family. In terms of assembly, homodimer. Interacts (via N-terminus) with host EXOC1 (via C-terminus); this interaction results in EXOC1 degradation through the proteasome degradation pathway. Forms heterodimers with envelope protein E in the endoplasmic reticulum and Golgi. As to quaternary structure, homodimer; in the endoplasmic reticulum and Golgi. Interacts with protein prM. Interacts with non-structural protein 1. In terms of assembly, homodimer; Homohexamer when secreted. Interacts with envelope protein E. Interacts (via N-terminus) with serine protease NS3. As to quaternary structure, forms a heterodimer with serine protease NS3. May form homooligomers. In terms of assembly, forms a heterodimer with NS2B. Interacts with NS4B. Interacts with unphosphorylated RNA-directed RNA polymerase NS5; this interaction stimulates RNA-directed RNA polymerase NS5 guanylyltransferase activity. Interacts with host MAVS; this interaction inhibits the synthesis of IFN-beta. Interacts with host AUP1; the interaction occurs in the presence of Dengue virus NS4B and induces lipophagy which facilitates production of virus progeny particles. As to quaternary structure, interacts with serine protease NS3. In terms of assembly, homodimer. Interacts with host STAT2; this interaction inhibits the phosphorylation of the latter, and, when all viral proteins are present (polyprotein), targets STAT2 for degradation. Interacts with serine protease NS3. Post-translationally, specific enzymatic cleavages in vivo yield mature proteins. Cleavages in the lumen of endoplasmic reticulum are performed by host signal peptidase, whereas cleavages in the cytoplasmic side are performed by serine protease NS3. Signal cleavage at the 2K-4B site requires a prior NS3 protease-mediated cleavage at the 4A-2K site. In terms of processing, cleaved in post-Golgi vesicles by a host furin, releasing the mature small envelope protein M, and peptide pr. This cleavage is incomplete as up to 30% of viral particles still carry uncleaved prM. N-glycosylated. Post-translationally, N-glycosylated. The excreted form is glycosylated and this is required for efficient secretion of the protein from infected cells. In terms of processing, acetylated by host KAT5. Acetylation modulates NS3 RNA-binding and unwinding activities and plays an important positive role for viral replication. Sumoylation of RNA-directed RNA polymerase NS5 increases NS5 protein stability allowing proper viral RNA replication. Post-translationally, phosphorylated on serines residues. This phosphorylation may trigger NS5 nuclear localization.

The protein resides in the virion. The protein localises to the host nucleus. Its subcellular location is the host cytoplasm. It localises to the host perinuclear region. It is found in the secreted. The protein resides in the virion membrane. The protein localises to the host endoplasmic reticulum membrane. Its subcellular location is the host mitochondrion. It carries out the reaction Selective hydrolysis of -Xaa-Xaa-|-Yaa- bonds in which each of the Xaa can be either Arg or Lys and Yaa can be either Ser or Ala.. The catalysed reaction is RNA(n) + a ribonucleoside 5'-triphosphate = RNA(n+1) + diphosphate. It catalyses the reaction a ribonucleoside 5'-triphosphate + H2O = a ribonucleoside 5'-diphosphate + phosphate + H(+). The enzyme catalyses ATP + H2O = ADP + phosphate + H(+). It carries out the reaction a 5'-end (5'-triphosphoguanosine)-ribonucleoside in mRNA + S-adenosyl-L-methionine = a 5'-end (N(7)-methyl 5'-triphosphoguanosine)-ribonucleoside in mRNA + S-adenosyl-L-homocysteine. The catalysed reaction is a 5'-end (N(7)-methyl 5'-triphosphoguanosine)-ribonucleoside in mRNA + S-adenosyl-L-methionine = a 5'-end (N(7)-methyl 5'-triphosphoguanosine)-(2'-O-methyl-ribonucleoside) in mRNA + S-adenosyl-L-homocysteine + H(+). Its function is as follows. Plays a role in virus budding by binding to the cell membrane and gathering the viral RNA into a nucleocapsid that forms the core of a mature virus particle. During virus entry, may induce genome penetration into the host cytoplasm after hemifusion induced by the surface proteins. Can migrate to the cell nucleus where it modulates host functions. Overcomes the anti-viral effects of host EXOC1 by sequestering and degrading the latter through the proteasome degradation pathway. Functionally, inhibits RNA silencing by interfering with host Dicer. Prevents premature fusion activity of envelope proteins in trans-Golgi by binding to envelope protein E at pH6.0. After virion release in extracellular space, gets dissociated from E dimers. In terms of biological role, acts as a chaperone for envelope protein E during intracellular virion assembly by masking and inactivating envelope protein E fusion peptide. prM is the only viral peptide matured by host furin in the trans-Golgi network probably to avoid catastrophic activation of the viral fusion activity in acidic Golgi compartment prior to virion release. prM-E cleavage is inefficient, and many virions are only partially matured. These uncleaved prM would play a role in immune evasion. Its function is as follows. May play a role in virus budding. Exerts cytotoxic effects by activating a mitochondrial apoptotic pathway through M ectodomain. May display a viroporin activity. Functionally, binds to host cell surface receptor and mediates fusion between viral and cellular membranes. Envelope protein is synthesized in the endoplasmic reticulum in the form of heterodimer with protein prM. They play a role in virion budding in the ER, and the newly formed immature particle is covered with 60 spikes composed of heterodimer between precursor prM and envelope protein E. The virion is transported to the Golgi apparatus where the low pH causes dissociation of PrM-E heterodimers and formation of E homodimers. prM-E cleavage is inefficient, and many virions are only partially matured. These uncleaved prM would play a role in immune evasion. Involved in immune evasion, pathogenesis and viral replication. Once cleaved off the polyprotein, is targeted to three destinations: the viral replication cycle, the plasma membrane and the extracellular compartment. Essential for viral replication. Required for formation of the replication complex and recruitment of other non-structural proteins to the ER-derived membrane structures. Excreted as a hexameric lipoparticle that plays a role against host immune response. Antagonizing the complement function. Binds to the host macrophages and dendritic cells. Inhibits signal transduction originating from Toll-like receptor 3 (TLR3). In terms of biological role, disrupts the host endothelial glycocalyx layer of host pulmonary microvascular endothelial cells, inducing degradation of sialic acid and shedding of heparan sulfate proteoglycans. NS1 induces expression of sialidases, heparanase, and activates cathepsin L, which activates heparanase via enzymatic cleavage. These effects are probably linked to the endothelial hyperpermeability observed in severe dengue disease. Its function is as follows. Component of the viral RNA replication complex that functions in virion assembly and antagonizes the host immune response. Functionally, required cofactor for the serine protease function of NS3. May have membrane-destabilizing activity and form viroporins. Displays three enzymatic activities: serine protease, NTPase and RNA helicase. NS3 serine protease, in association with NS2B, performs its autocleavage and cleaves the polyprotein at dibasic sites in the cytoplasm: C-prM, NS2A-NS2B, NS2B-NS3, NS3-NS4A, NS4A-2K and NS4B-NS5. NS3 RNA helicase binds RNA and unwinds dsRNA in the 3' to 5' direction. In terms of biological role, regulates the ATPase activity of the NS3 helicase activity. NS4A allows NS3 helicase to conserve energy during unwinding. Plays a role in the inhibition of the host innate immune response. Interacts with host MAVS and thereby prevents the interaction between RIGI and MAVS. In turn, IFN-beta production is impaired. Interacts with host AUP1 which mediates induction of lipophagy in host cells and facilitates production of virus progeny particles. Its function is as follows. Functions as a signal peptide for NS4B and is required for the interferon antagonism activity of the latter. Functionally, induces the formation of ER-derived membrane vesicles where the viral replication takes place. Inhibits interferon (IFN)-induced host STAT1 phosphorylation and nuclear translocation, thereby preventing the establishment of cellular antiviral state by blocking the IFN-alpha/beta pathway. Replicates the viral (+) and (-) RNA genome, and performs the capping of genomes in the cytoplasm. NS5 methylates viral RNA cap at guanine N-7 and ribose 2'-O positions. Besides its role in RNA genome replication, also prevents the establishment of cellular antiviral state by blocking the interferon-alpha/beta (IFN-alpha/beta) signaling pathway. Inhibits host TYK2 and STAT2 phosphorylation, thereby preventing activation of JAK-STAT signaling pathway. In Dengue virus type 3 (strain China/80-2/1980) (DENV-3), this protein is Genome polyprotein.